The chain runs to 384 residues: GDP-mannose transporter (384 aa).

At methionine 1–serine 40 the chain is on the cytoplasmic side. The chain crosses the membrane as a helical span at residues isoleucine 41 to valine 61. Residues methionine 62 to glycine 69 are Lumenal-facing. A helical membrane pass occupies residues leucine 70–isoleucine 90. At glutamine 91–arginine 110 the chain is on the cytoplasmic side. Residues lysine 111–serine 127 traverse the membrane as a helical segment. The Lumenal portion of the chain corresponds to lysine 128–serine 134. A helical transmembrane segment spans residues isoleucine 135 to tyrosine 151. Topologically, residues glycine 152 to serine 160 are cytoplasmic. A helical transmembrane segment spans residues valine 161 to alanine 182. The Lumenal portion of the chain corresponds to aspartate 183–threonine 200. The chain crosses the membrane as a helical span at residues leucine 201 to glycine 221. Over methionine 222–threonine 236 the chain is Cytoplasmic. A helical membrane pass occupies residues leucine 237–methionine 257. Over glutamate 258–asparagine 276 the chain is Lumenal. Asparagine 264 carries an N-linked (GlcNAc...) asparagine glycan. A helical transmembrane segment spans residues isoleucine 277 to tryptophan 297. The Cytoplasmic segment spans residues cysteine 298 to threonine 305. Residues threonine 306–phenylalanine 326 form a helical membrane-spanning segment. The Lumenal segment spans residues aspartate 327–proline 329. The helical transmembrane segment at valine 330–valine 350 threads the bilayer. Residues alanine 351 to serine 384 lie on the Cytoplasmic side of the membrane. The segment at leucine 364–serine 384 is disordered. Positions proline 369–serine 384 are enriched in polar residues.

The protein belongs to the TPT transporter family. SLC35D subfamily. Homooligomer.

It localises to the golgi apparatus membrane. The protein localises to the cytoplasmic vesicle membrane. It is found in the endoplasmic reticulum membrane. Its function is as follows. Involved in the import of GDP-mannose from the cytoplasm into the Golgi lumen. The protein is GDP-mannose transporter (gmt1) of Aspergillus terreus (strain NIH 2624 / FGSC A1156).